The following is a 591-amino-acid chain: L-fucose isomerase (591 aa).

Residues Glu337 and Asp361 each act as proton acceptor in the active site. Mn(2+)-binding residues include Glu337, Asp361, and His528.

This sequence belongs to the L-fucose isomerase family. As to quaternary structure, homohexamer. The cofactor is Mn(2+).

The protein resides in the cytoplasm. The enzyme catalyses L-fucose = L-fuculose. It participates in carbohydrate degradation; L-fucose degradation; L-lactaldehyde and glycerone phosphate from L-fucose: step 1/3. Its function is as follows. Converts the aldose L-fucose into the corresponding ketose L-fuculose. The protein is L-fucose isomerase of Escherichia coli O6:K15:H31 (strain 536 / UPEC).